The chain runs to 287 residues: Hypersensitive-induced response protein-like protein 2 (287 aa).

Gly-2 carries N-myristoyl glycine lipidation.

Positive regulator of hypersensitive response (HR)-like cell death. May be involved in potassium ion channel regulation. This is Hypersensitive-induced response protein-like protein 2 (HIRL2) from Oryza sativa subsp. japonica (Rice).